The following is a 153-amino-acid chain: MLAFNFFGATEGGLFDINATLPLMAIQVVALTYILNSLFFKPVGNVVEKREKFVSNNIIEAKNKLSEVKKLEAELLTQLQSARTEAQRIVGEAENESDKLYKEALELANNEANASKEKARLEIESQTSAARDQLSKQADDLSELIVNRLILEK.

Residues 23–40 (LMAIQVVALTYILNSLFF) form a helical membrane-spanning segment.

The protein belongs to the ATPase B chain family. In terms of assembly, F-type ATPases have 2 components, F(1) - the catalytic core - and F(0) - the membrane proton channel. F(1) has five subunits: alpha(3), beta(3), gamma(1), delta(1), epsilon(1). F(0) has four main subunits: a(1), b(1), b'(1) and c(10-14). The alpha and beta chains form an alternating ring which encloses part of the gamma chain. F(1) is attached to F(0) by a central stalk formed by the gamma and epsilon chains, while a peripheral stalk is formed by the delta, b and b' chains.

The protein localises to the cellular thylakoid membrane. In terms of biological role, f(1)F(0) ATP synthase produces ATP from ADP in the presence of a proton or sodium gradient. F-type ATPases consist of two structural domains, F(1) containing the extramembraneous catalytic core and F(0) containing the membrane proton channel, linked together by a central stalk and a peripheral stalk. During catalysis, ATP synthesis in the catalytic domain of F(1) is coupled via a rotary mechanism of the central stalk subunits to proton translocation. Functionally, component of the F(0) channel, it forms part of the peripheral stalk, linking F(1) to F(0). The b'-subunit is a diverged and duplicated form of b found in plants and photosynthetic bacteria. In Prochlorococcus marinus (strain MIT 9312), this protein is ATP synthase subunit b'.